The sequence spans 267 residues: MTEERKETFEEEINQSERIDADEEPLSRMSRKASRQSKQKQKQKQKPRQERGESTVKDKLASVWAAINRYCGFAFSILKSPAKTVVTDGFSHYKYGLISMLIFSIIFSIGNWFQLKASWNRPLGFGERHHAFYDGFLVVLVYLLIFFAVMVFAIWAVSRYMMKQKVTFREAAAVLGSLLVPVIAVSILWLIFAIVNIPMLTVLFTVLILFSIFFIIALYVQRVYQAAQDAPIDYIYCVFAVVAIALLFTAVTWPFISEYITASLIPL.

The segment at 1-55 is disordered; that stretch reads MTEERKETFEEEINQSERIDADEEPLSRMSRKASRQSKQKQKQKQKPRQERGEST. Positions 9–24 are enriched in acidic residues; the sequence is FEEEINQSERIDADEE. Over residues 29–46 the composition is skewed to basic residues; sequence MSRKASRQSKQKQKQKQK. Helical transmembrane passes span 93–115, 135–157, 173–195, 199–221, and 234–256; these read YKYG…WFQL, GFLV…IWAV, AVLG…FAIV, MLTV…LYVQ, and YIYC…WPFI.

It is found in the cell membrane. This is an uncharacterized protein from Bacillus subtilis (strain 168).